The following is a 218-amino-acid chain: Octanoyltransferase (218 aa).

Positions 32 to 218 (GEAAEAIWLL…LRTFPQHFPD (187 aa)) constitute a BPL/LPL catalytic domain. Substrate-binding positions include 71-78 (RGGQYTYH), 151-153 (AIG), and 164-166 (GLS). The active-site Acyl-thioester intermediate is the Cys182.

Belongs to the LipB family.

Its subcellular location is the cytoplasm. The catalysed reaction is octanoyl-[ACP] + L-lysyl-[protein] = N(6)-octanoyl-L-lysyl-[protein] + holo-[ACP] + H(+). Its pathway is protein modification; protein lipoylation via endogenous pathway; protein N(6)-(lipoyl)lysine from octanoyl-[acyl-carrier-protein]: step 1/2. Catalyzes the transfer of endogenously produced octanoic acid from octanoyl-acyl-carrier-protein onto the lipoyl domains of lipoate-dependent enzymes. Lipoyl-ACP can also act as a substrate although octanoyl-ACP is likely to be the physiological substrate. The chain is Octanoyltransferase from Cereibacter sphaeroides (strain ATCC 17023 / DSM 158 / JCM 6121 / CCUG 31486 / LMG 2827 / NBRC 12203 / NCIMB 8253 / ATH 2.4.1.) (Rhodobacter sphaeroides).